The primary structure comprises 49 residues: Large ribosomal subunit protein bL33 (49 aa).

This sequence belongs to the bacterial ribosomal protein bL33 family.

This Streptococcus gordonii (strain Challis / ATCC 35105 / BCRC 15272 / CH1 / DL1 / V288) protein is Large ribosomal subunit protein bL33.